We begin with the raw amino-acid sequence, 280 residues long: Energy-coupling factor transporter ATP-binding protein EcfA1 (280 aa).

Positions 6–241 constitute an ABC transporter domain; that stretch reads IELKNVTFRY…GDELLDLGLD (236 aa). 41–48 contributes to the ATP binding site; it reads GHNGSGKS.

This sequence belongs to the ABC transporter superfamily. Energy-coupling factor EcfA family. Forms a stable energy-coupling factor (ECF) transporter complex composed of 2 membrane-embedded substrate-binding proteins (S component), 2 ATP-binding proteins (A component) and 2 transmembrane proteins (T component).

It localises to the cell membrane. Functionally, ATP-binding (A) component of a common energy-coupling factor (ECF) ABC-transporter complex. Unlike classic ABC transporters this ECF transporter provides the energy necessary to transport a number of different substrates. The protein is Energy-coupling factor transporter ATP-binding protein EcfA1 of Streptococcus mutans serotype c (strain ATCC 700610 / UA159).